Reading from the N-terminus, the 381-residue chain is MTLKNDYKTIFFSLFGIFIFSCINAINFYNFKIFLLIKNLGGEQINNINQTKFIGSIIAGFSLIQLINKLSNKRIILISLSLLIICTINLIILNNYTLIKINFILINFGIFSYFTSRTLDIIEISKEKKYLFLACIILLWAGGNLMVDLLNPFIKPTNNTIVICALLYCINILTEFLHYNHTSHKLNLNSKFSSLIKNIELQLLTGFVVSYITLNILWYYEAFALKKQLALINLKLILKYIFLTICFAIIPICYILSKINKYFANLSLNIILLICFILLPIHGTNKNLNILYIILIGNCLGAIFICNILILIDKFQDYELRTALLSYFSMCSIGIYAGALSSHVPYGTIKGSDFLFSVFAVVGSFVTYHFWYFIQYKLYRF.

11 consecutive transmembrane segments (helical) span residues I10–Y29, I75–L93, L98–R117, Y130–V147, T157–Y179, I199–E221, L236–I255, Y262–T284, N289–L311, A323–L340, and L355–I374.

It localises to the cell membrane. This is an uncharacterized protein from Rickettsia prowazekii (strain Madrid E).